The primary structure comprises 77 residues: Translation initiation factor IF-1, chloroplastic (77 aa).

Positions Met-1–Arg-71 constitute an S1-like domain.

Belongs to the IF-1 family. In terms of assembly, component of the 30S ribosomal translation pre-initiation complex which assembles on the 30S ribosome in the order IF-2 and IF-3, IF-1 and N-formylmethionyl-tRNA(fMet); mRNA recruitment can occur at any time during PIC assembly.

The protein resides in the plastid. The protein localises to the chloroplast. One of the essential components for the initiation of protein synthesis. Stabilizes the binding of IF-2 and IF-3 on the 30S subunit to which N-formylmethionyl-tRNA(fMet) subsequently binds. Helps modulate mRNA selection, yielding the 30S pre-initiation complex (PIC). Upon addition of the 50S ribosomal subunit IF-1, IF-2 and IF-3 are released leaving the mature 70S translation initiation complex. In Lactuca sativa (Garden lettuce), this protein is Translation initiation factor IF-1, chloroplastic.